Here is a 1407-residue protein sequence, read N- to C-terminus: DNA-directed RNA polymerase subunit beta' (1407 aa).

The Zn(2+) site is built by C70, C72, C85, and C88. Mg(2+)-binding residues include D460, D462, and D464. K972 carries the post-translational modification N6-acetyllysine.

The protein belongs to the RNA polymerase beta' chain family. As to quaternary structure, the RNAP catalytic core consists of 2 alpha, 1 beta, 1 beta' and 1 omega subunit. When a sigma factor is associated with the core the holoenzyme is formed, which can initiate transcription. Mg(2+) serves as cofactor. The cofactor is Zn(2+).

It carries out the reaction RNA(n) + a ribonucleoside 5'-triphosphate = RNA(n+1) + diphosphate. Functionally, DNA-dependent RNA polymerase catalyzes the transcription of DNA into RNA using the four ribonucleoside triphosphates as substrates. In Escherichia coli O6:K15:H31 (strain 536 / UPEC), this protein is DNA-directed RNA polymerase subunit beta'.